A 262-amino-acid chain; its full sequence is Tryptophan synthase alpha chain (262 aa).

Catalysis depends on proton acceptor residues glutamate 48 and aspartate 59.

The protein belongs to the TrpA family. In terms of assembly, tetramer of two alpha and two beta chains.

It catalyses the reaction (1S,2R)-1-C-(indol-3-yl)glycerol 3-phosphate + L-serine = D-glyceraldehyde 3-phosphate + L-tryptophan + H2O. It functions in the pathway amino-acid biosynthesis; L-tryptophan biosynthesis; L-tryptophan from chorismate: step 5/5. Its function is as follows. The alpha subunit is responsible for the aldol cleavage of indoleglycerol phosphate to indole and glyceraldehyde 3-phosphate. In Helicobacter pylori (strain G27), this protein is Tryptophan synthase alpha chain.